Reading from the N-terminus, the 84-residue chain is METVISFTAIAVAIMIGLAALGTAIGFAILGGKFLEASARQPELAPALQIKMFIVAGLLDAISMIAVGVALFFVFANPFLAQLG.

2 helical membrane passes run 10–30 (IAVA…FAIL) and 53–73 (FIVA…ALFF).

The protein belongs to the ATPase C chain family. As to quaternary structure, F-type ATPases have 2 components, F(1) - the catalytic core - and F(0) - the membrane proton channel. F(1) has five subunits: alpha(3), beta(3), gamma(1), delta(1), epsilon(1). F(0) has three main subunits: a(1), b(2) and c(10-14). The alpha and beta chains form an alternating ring which encloses part of the gamma chain. F(1) is attached to F(0) by a central stalk formed by the gamma and epsilon chains, while a peripheral stalk is formed by the delta and b chains.

It localises to the cell inner membrane. In terms of biological role, f(1)F(0) ATP synthase produces ATP from ADP in the presence of a proton or sodium gradient. F-type ATPases consist of two structural domains, F(1) containing the extramembraneous catalytic core and F(0) containing the membrane proton channel, linked together by a central stalk and a peripheral stalk. During catalysis, ATP synthesis in the catalytic domain of F(1) is coupled via a rotary mechanism of the central stalk subunits to proton translocation. Functionally, key component of the F(0) channel; it plays a direct role in translocation across the membrane. A homomeric c-ring of between 10-14 subunits forms the central stalk rotor element with the F(1) delta and epsilon subunits. In Shewanella putrefaciens (strain CN-32 / ATCC BAA-453), this protein is ATP synthase subunit c.